The sequence spans 937 residues: MKMRAITAMLLLVLSGQCGILAGKVNKHKPWIETSYHGVITENMDTVMLDPPLVALDKDAPVPYAGEICAFKIHGQEAPFEAEVLNRTSGEGVLRARGPIDCEQQKEYTFIIQAYDCGASPNGADWKKSHKAVVHIQVDDVNEFSPVFREPLYRATVTEGKIYDSILQVEAWDQDCSPQYSQICNYEIVTQDTPFAIDRNGNIRNTERLSFDKQQHYKIMVTAYDCGQKRAMESVPVHIDVKPVCKPGWQGWNKRVDYEPGTGSKQLFPKMHLETCDGPLSSVRAMVELQTSHIGKGCDRETYSEKSLQKLCGAASGSTDLLPAPSTSTNWTASLLTDSGRDSDLIFRFDGRQAANIPDWVVPQNLTDQFTIATWMKHGPSPGLRAEKETLLCNSDKTEMNRHHYSLYVHNCRLVFLLRRDFIQLDSFRPAEFHWRLEQICDKEWHYYVINVEFPSVTLFVDGVTYEPYLVTDDWPIHPSEIDVQLTVGACWQGGEVTTPRFTQYFRGSLSGLTIRPGKIATQKVISCLQACKEGLDISSLESLGKGIKFHFNPAQSVLVMEADDLESINTAMTKVSYINSRQFPTPGLRKLHITTTVQCFGEDTCISIPEIKAMVMVLPPSEPRITIAGVERLVWPSAQLRAPVGVALFKDIHIISTVTKTDATLSIARRPGVLELMHNLDYCDVLVIGEELDPERESLEIHHSSLLGKHLDATNSTSGISIYGVDSMAHYEQAIRQVRYRNWKPGSLSERRFRLSCSELNGRYTSNEFNLEIGVVHSSEAVEHVNHMAVQSQFMRPVHHPLVVHTVNSDHISGTPPAATVVIVMCIAALVVIVVLGIYRIHTTHQDSSKEDEEERKDPEMDWDNSNLNSIEGTQIAEEVREEEPEEDEDEDEEDDDLAGDLSSAESEDSDEDEETNIQKGKVKGKLEWDPSTLPY.

An N-terminal signal peptide occupies residues 1–22; that stretch reads MKMRAITAMLLLVLSGQCGILA. Residues 23-818 lie on the Extracellular side of the membrane; it reads GKVNKHKPWI…NSDHISGTPP (796 aa). 2 consecutive Cadherin domains span residues 32–148 and 149–249; these read IETS…SPVF and REPL…KPGW. Asn-86 carries an N-linked (GlcNAc...) asparagine glycan. N-linked (GlcNAc...) asparagine glycosylation is found at Asn-330, Asn-365, and Asn-716. A helical membrane pass occupies residues 819-839; the sequence is AATVVIVMCIAALVVIVVLGI. At 840 to 937 the chain is on the cytoplasmic side; it reads YRIHTTHQDS…LEWDPSTLPY (98 aa). Residues 846-937 form a disordered region; the sequence is HQDSSKEDEE…LEWDPSTLPY (92 aa). Polar residues predominate over residues 865–874; sequence DNSNLNSIEG. 2 stretches are compositionally biased toward acidic residues: residues 881–900 and 907–917; these read VREEEPEEDEDEDEEDDDLA and ESEDSDEDEET.

Belongs to the calsyntenin family. As to quaternary structure, homooligomer and heterooligomer; mediates both homophilic and heterophilc interactions with clstn1 and clstn3 paralogs via cadherin domains. In terms of tissue distribution, by 48 hours post-fertilization (hpf), widely expressed in the brain, with strong expression in the telencephalon and the midbrain.

It localises to the postsynaptic cell membrane. The protein localises to the endoplasmic reticulum membrane. It is found in the golgi apparatus membrane. The protein resides in the cell projection. Its subcellular location is the dendrite. Postsynaptic adhesion molecule. Promotes synapse development by acting as a cell adhesion molecule at the postsynaptic membrane, which associates with presynaptic neurexins. This chain is Calsyntenin-2 (clstn2a), found in Danio rerio (Zebrafish).